The sequence spans 139 residues: Nucleoside diphosphate kinase (139 aa).

The ATP site is built by Lys-11, Phe-59, Arg-87, Thr-93, Arg-104, and Asn-114. Residue His-117 is the Pros-phosphohistidine intermediate of the active site.

The protein belongs to the NDK family. In terms of assembly, homotetramer. Mg(2+) is required as a cofactor.

It is found in the cytoplasm. It catalyses the reaction a 2'-deoxyribonucleoside 5'-diphosphate + ATP = a 2'-deoxyribonucleoside 5'-triphosphate + ADP. It carries out the reaction a ribonucleoside 5'-diphosphate + ATP = a ribonucleoside 5'-triphosphate + ADP. Its function is as follows. Major role in the synthesis of nucleoside triphosphates other than ATP. The ATP gamma phosphate is transferred to the NDP beta phosphate via a ping-pong mechanism, using a phosphorylated active-site intermediate. This Coxiella burnetii (strain CbuK_Q154) (Coxiella burnetii (strain Q154)) protein is Nucleoside diphosphate kinase.